A 318-amino-acid polypeptide reads, in one-letter code: NADH-ubiquinone oxidoreductase chain 1 (318 aa).

A run of 8 helical transmembrane segments spans residues 3-23 (FINILTLLIPILIAMAFLTLV), 70-90 (LFIIAPTLSLTLALSLWIPLP), 100-120 (LGMLFILATSSLSVYSILWSG), 146-166 (MAIILLSVLLMSGSFSLQMLI), 171-191 (HIWLLIPAWPMAMMWYISTLA), 231-251 (IILMNALTSIVFLGPLYHINY), 254-273 (LYSTSFMTETLLLSTTFLWI), and 294-314 (LPLTLAFCMWYISLPIFLAGI).

This sequence belongs to the complex I subunit 1 family. Core subunit of respiratory chain NADH dehydrogenase (Complex I) which is composed of 45 different subunits.

It is found in the mitochondrion inner membrane. It catalyses the reaction a ubiquinone + NADH + 5 H(+)(in) = a ubiquinol + NAD(+) + 4 H(+)(out). Its function is as follows. Core subunit of the mitochondrial membrane respiratory chain NADH dehydrogenase (Complex I) which catalyzes electron transfer from NADH through the respiratory chain, using ubiquinone as an electron acceptor. Essential for the catalytic activity and assembly of complex I. The chain is NADH-ubiquinone oxidoreductase chain 1 from Rattus norvegicus (Rat).